Here is a 173-residue protein sequence, read N- to C-terminus: Cytochrome c-type biogenesis protein CcmE (173 aa).

The Cytoplasmic segment spans residues 1 to 8 (MNPRRKSR). Residues 9 to 29 (FKLVIFVVLGIAIASGLMLYA) traverse the membrane as a helical; Signal-anchor for type II membrane protein segment. The Periplasmic portion of the chain corresponds to 30-173 (LRQNIDLFYT…RDRQEKEGAK (144 aa)). 2 residues coordinate heme: His131 and Tyr135. Residues 152 to 173 (GIKAADLKGESARDRQEKEGAK) are disordered. Positions 156 to 173 (ADLKGESARDRQEKEGAK) are enriched in basic and acidic residues.

Belongs to the CcmE/CycJ family.

Its subcellular location is the cell inner membrane. Heme chaperone required for the biogenesis of c-type cytochromes. Transiently binds heme delivered by CcmC and transfers the heme to apo-cytochromes in a process facilitated by CcmF and CcmH. The polypeptide is Cytochrome c-type biogenesis protein CcmE (Haemophilus influenzae (strain PittEE)).